Reading from the N-terminus, the 234-residue chain is uncharacterized protein (234 aa).

Transmembrane regions (helical) follow at residues 32–52 (GLRT…VSVL), 62–82 (IPAQ…LKEG), and 106–126 (QGLF…NIAL).

The protein belongs to the MgtC/SapB family.

The protein localises to the cell membrane. This is an uncharacterized protein from Synechocystis sp. (strain ATCC 27184 / PCC 6803 / Kazusa).